Consider the following 137-residue polypeptide: Large ribosomal subunit protein uL16 (137 aa).

The protein belongs to the universal ribosomal protein uL16 family. In terms of assembly, part of the 50S ribosomal subunit.

In terms of biological role, binds 23S rRNA and is also seen to make contacts with the A and possibly P site tRNAs. This is Large ribosomal subunit protein uL16 from Psychrobacter sp. (strain PRwf-1).